The chain runs to 454 residues: Replicative DNA helicase DnaC (454 aa).

The region spanning 179–445 (RKGDITGIPT…NKFVNLERRF (267 aa)) is the SF4 helicase domain. 210–217 (ARPSVGKT) provides a ligand contact to ATP.

This sequence belongs to the helicase family. DnaB subfamily. In terms of assembly, the DNA replisome assembles sequentially on oriC in this order; DnaA, DnaD, DnaB, DnaI-DnaC helicase. Monomer in the absence of ATP, in its presence forms a probable homohexamer which is not active as a helicase in vitro. Interacts separately and simultaneously with helicase loaders DnaB and DnaI. Interaction with DnaB does not require ATP. Interaction with DnaI requires ATP, probably forms a DnaC(6):DnaI(6) complex, which is not active as a helicase.

It is found in the cytoplasm. Its subcellular location is the nucleoid. The enzyme catalyses Couples ATP hydrolysis with the unwinding of duplex DNA at the replication fork by translocating in the 5'-3' direction. This creates two antiparallel DNA single strands (ssDNA). The leading ssDNA polymer is the template for DNA polymerase III holoenzyme which synthesizes a continuous strand.. The catalysed reaction is ATP + H2O = ADP + phosphate + H(+). Functionally, the main replicative DNA helicase, it participates in initiation and elongation during chromosome replication. Travels ahead of the DNA replisome, separating dsDNA into templates for DNA synthesis. The monomer has helicase activity in the presence of DnaI which is further increased by DnaB; the purified oligomeric form (probably a DnaC hexamer) does not have helicase activity in vitro, nor does the DnaC(6):DnaI(6) complex. The direction was not determined but is probably 5'-3'. Helicase activity requires an rNTP and is inactive with dNTPs. Has weak ATPase activity as a monomer, as an oligomer has ATPase activity which is stimulated by single-stranded (ss)DNA and further stimulated by DnaI and more by DnaB. Deletion of a single T residue in the promoter region (a run of 8 Ts becomes 7 Ts) decreases the helicase levels by 50%, decreasing DNA replication inititation during fast growth in rich medium. Suppresses the synthetic lethality of a dnaA1-yabA deletion for growth on rich medium. The chain is Replicative DNA helicase DnaC from Bacillus subtilis (strain 168).